The following is a 575-amino-acid chain: Carboxylesterase 5A (575 aa).

The signal sequence occupies residues 1–27 (MSGEWGHLGQTLIWAVWVLAAATEGPA). Residue Asn-82 is glycosylated (N-linked (GlcNAc...) asparagine). An intrachain disulfide couples Cys-94 to Cys-121. Ser-226 acts as the Acyl-ester intermediate in catalysis. A disulfide bridge links Cys-280 with Cys-291. A glycan (N-linked (GlcNAc...) asparagine) is linked at Asn-281. The Charge relay system role is filled by Glu-345. Asn-363 carries N-linked (GlcNAc...) asparagine glycosylation. The active-site Charge relay system is His-454. Asn-524 carries an N-linked (GlcNAc...) asparagine glycan.

This sequence belongs to the type-B carboxylesterase/lipase family. Post-translationally, N-glycosylated.

Its subcellular location is the secreted. The catalysed reaction is a carboxylic ester + H2O = an alcohol + a carboxylate + H(+). In terms of biological role, involved in the detoxification of xenobiotics and in the activation of ester and amide prodrugs. The polypeptide is Carboxylesterase 5A (CES5A) (Canis lupus familiaris (Dog)).